Consider the following 655-residue polypeptide: Tumor necrosis factor receptor superfamily member 21 (655 aa).

The first 41 residues, 1-41 (MGTRASSITALASCSRTAGQVGATMVAGSLLLLGFLSTITA), serve as a signal peptide directing secretion. The Extracellular portion of the chain corresponds to 42–349 (QPEQKTLSLP…AHKHFDINEH (308 aa)). TNFR-Cys repeat units follow at residues 50-88 (LPGT…LRVC), 90-131 (SCPA…DREC), 133-167 (CPPG…EDVR), and 170-211 (QCAR…DNVC). Intrachain disulfides connect C67/C80, C70/C88, C91/C106, C109/C123, C113/C131, C133/C144, C150/C168, C171/C186, and C192/C211. N82 is a glycosylation site (N-linked (GlcNAc...) asparagine). An N-linked (GlcNAc...) asparagine glycan is attached at N141. Disordered stretches follow at residues 222–305 (PPSS…QAPH) and 318–339 (EATG…PRQN). 2 stretches are compositionally biased toward polar residues: residues 241–262 (VPSS…TASV) and 276–302 (PDNT…THQQ). N252, N257, N278, and N289 each carry an N-linked (GlcNAc...) asparagine glycan. Basic residues predominate over residues 330–339 (APKRGHPRQN). Residues 350–370 (LPWMIVLFLLLVLVLIVVCSI) form a helical membrane-spanning segment. The S-palmitoyl cysteine moiety is linked to residue C368. Residues 371–655 (RKSSRTLKKG…SVYSHLPDLL (285 aa)) lie on the Cytoplasmic side of the membrane. A Death domain is found at 415-498 (GIDILKLVAA…DVVEKIRGLM (84 aa)).

Associates with TRADD. Interacts with NGFR. Interacts with CASP8. Post-translationally, oxidized in response to reactive oxygen species (ROS), leading to endocytosis. As to expression, detected in spleen B-cells (at protein level). Ubiquitous. Highly expressed in adult spleen, thymus, testis, prostate, ovary, small intestine, colon, brain, lung and kidney, and in fetal brain, liver and lung. Detected at lower levels in adult peripheral blood leukocytes, lung, and in fetal muscle, heart, kidney, small intestine and skin. Detected in T-cells, B-cells and monocytes. In T-cells expression is highest in Th0 cells, intermediate in Th2 cells and lower in Th1 cells. Expressed at low levels in proliferating progenitors in the spinal cord, but is highly expressed by differentiating neurons within the spinal cord and adjacent dorsal root ganglia.

It is found in the cell membrane. Promotes apoptosis, possibly via a pathway that involves the activation of NF-kappa-B. Can also promote apoptosis mediated by BAX and by the release of cytochrome c from the mitochondria into the cytoplasm. Trophic-factor deprivation triggers the cleavage of surface APP by beta-secretase to release sAPP-beta which is further cleaved to release an N-terminal fragment of APP (N-APP). Negatively regulates oligodendrocyte survival, maturation and myelination. Plays a role in signaling cascades triggered by stimulation of T-cell receptors, in the adaptive immune response and in the regulation of T-cell differentiation and proliferation. Negatively regulates T-cell responses and the release of cytokines such as IL4, IL5, IL10, IL13 and IFNG by Th2 cells. Negatively regulates the production of IgG, IgM and IgM in response to antigens. May inhibit the activation of JNK in response to T-cell stimulation. Also acts as a regulator of pyroptosis: recruits CASP8 in response to reactive oxygen species (ROS) and subsequent oxidation, leading to activation of GSDMC. The sequence is that of Tumor necrosis factor receptor superfamily member 21 (Tnfrsf21) from Mus musculus (Mouse).